The chain runs to 562 residues: MVKIVTVKTKAYPDQKPGTSGLRKRVKVFQSSTNYAENFIQSIISTVEPAQRQEATLVVGGDGRFYMKEAIQLIVRIAAANGIGRLVIGQNGILSTPAVSCIIRKIKAIGGIILTASHNPGGPNGDFGIKFNISNGGPAPEAITDKIFQISKTIEEYAICPDLKVDLGVLGKQQFDLENKFKPFTVEIVDSVEAYATMLRNIFDFNALKELLSGPNRLKIRIDAMHGVVGPYVKKILCEELGAPANSAVNCVPLEDFGGHHPDPNLTYAADLVETMKSGEHDFGAAFDGDGDRNMILGKHGFFVNPSDSVAVIAANIFSIPYFQQTGVRGFARSMPTSGALDRVANATKIALYETPTGWKFFGNLMDASKLSLCGEESFGTGSDHIREKDGLWAVLAWLSILATRKQSVEDILKDHWHKFGRNFFTRYDYEEVEAEGATKMMKDLEALMFDRSFVGKQFSANDKVYTVEKADNFEYHDPVDGSVSKNQGLRLIFADGSRIIFRLSGTGSAGATIRLYIDSYEKDNAKINQDPQVMLAPLISIALKVSQLQERTGRTAPTVIT.

At Met1 the chain carries N-acetylmethionine. Lys16 bears the N6-acetyllysine mark. Arg23 contributes to the alpha-D-glucose 1,6-bisphosphate binding site. The residue at position 115 (Thr115) is a Phosphothreonine. An alpha-D-glucose 1,6-bisphosphate-binding site is contributed by Ser117. Ser117 acts as the Phosphoserine intermediate in catalysis. Ser117 is a binding site for Mg(2+). Phosphoserine is present on residues Ser117 and Ser134. The residue at position 185 (Thr185) is a Phosphothreonine. Residue Ser213 is modified to Phosphoserine. Asp288, Asp290, and Asp292 together coordinate Mg(2+). Asp292 and Arg293 together coordinate alpha-D-glucose 1,6-bisphosphate. Lys349 is modified (N6-acetyllysine). Tyr353 is modified (phosphotyrosine). An alpha-D-glucose 1,6-bisphosphate-binding site is contributed by Thr357. The residue at position 369 (Ser369) is a Phosphoserine. Glu376, Ser378, and Lys389 together coordinate alpha-D-glucose 1,6-bisphosphate. Residue Ser378 is modified to Phosphoserine. Lys419 carries the N6-succinyllysine modification. Thr467 is modified (phosphothreonine; by PAK1). Residues Ser485 and Ser505 each carry the phosphoserine modification. Thr507 bears the Phosphothreonine mark. Phosphoserine is present on residues Ser509 and Ser541.

The protein belongs to the phosphohexose mutase family. In terms of assembly, monomer. Mg(2+) serves as cofactor. Post-translationally, isoform 2 is the major calmodulin-dependent phosphoprotein in junctional skeletal sarcoplasmic reticulum vesicles. Phosphorylation at Thr-467 by PAK1 significantly enhances enzymatic activity.

The protein localises to the cytoplasm. The protein resides in the sarcoplasmic reticulum. The enzyme catalyses alpha-D-glucose 1-phosphate = alpha-D-glucose 6-phosphate. It catalyses the reaction O-phospho-L-seryl-[protein] + alpha-D-glucose 1-phosphate = alpha-D-glucose 1,6-bisphosphate + L-seryl-[protein]. It carries out the reaction alpha-D-glucose 1,6-bisphosphate + L-seryl-[protein] = O-phospho-L-seryl-[protein] + alpha-D-glucose 6-phosphate. Glucose-1,6-bisphosphate enhances phosphorylation of the active site Ser-117, and thereby increases enzyme activity. Catalyzes the reversible isomerization of alpha-D-glucose 1-phosphate to alpha-D-glucose 6-phosphate. The mechanism proceeds via the intermediate compound alpha-D-glucose 1,6-bisphosphate. This enzyme participates in both the breakdown and synthesis of glucose. The polypeptide is Phosphoglucomutase-1 (PGM1) (Oryctolagus cuniculus (Rabbit)).